Reading from the N-terminus, the 185-residue chain is Ribosome-recycling factor (185 aa).

The protein belongs to the RRF family.

The protein localises to the cytoplasm. Functionally, responsible for the release of ribosomes from messenger RNA at the termination of protein biosynthesis. May increase the efficiency of translation by recycling ribosomes from one round of translation to another. The sequence is that of Ribosome-recycling factor from Streptococcus pneumoniae serotype 19F (strain G54).